Consider the following 205-residue polypeptide: MAMQKLFTYIYEFIEYRKMVLLEEKVPYDKFVQMVLNTGFFRINAETLNHGIVSVFIFGANGKYVHHGGDMRTLLTNTLNEKKHYEELILIVDKPVLSKKNILDIIVEQRAANPTIVINIYPYHLFCINIPKVSAIPKHKLITQEEAQEFLGREYLQPQDLMQISASDPPVVWLGGRPGDFVQIERPSETAMHAVVIRFITKSKI.

Belongs to the archaeal RpoH/eukaryotic RPB5 RNA polymerase subunit family. Part of the viral DNA-directed RNA polymerase that consists of 8 polII-like subunits (RPB1, RPB2, RPB3, RPB5, RPB6, RPB7, RPB9, RPB10), a capping enzyme and a termination factor.

It localises to the host cytoplasm. It is found in the virion. Component of the DNA-directed RNA polymerase (RNAP) that catalyzes the transcription in the cytoplasm of viral DNA into RNA using the four ribonucleoside triphosphates as substrates. The sequence is that of DNA-directed RNA polymerase RPB5 homolog from Ornithodoros (relapsing fever ticks).